We begin with the raw amino-acid sequence, 276 residues long: Protein PXR1 (276 aa).

Residues 1–23 (MGLAGTKIKQRFGNDPRNTNWSN) form a disordered region. The G-patch domain occupies 25-71 (TSRFGHQYLAKMGWQQGSGLGLVSHALTTHVKVSIKDDNLGLGAKLH). A compositionally biased stretch (basic and acidic residues) spans 152–172 (DDGKKSRKRKADESETKEDKK). Residues 152 to 261 (DDGKKSRKRK…SKWIKQKRAS (110 aa)) are disordered. Residues 173-218 (TLKKHKKEKKDKKEKKEKKKKKEKKDKKDKKDKKNKKDKKDKKDKK) show a composition bias toward basic residues. A compositionally biased stretch (basic and acidic residues) spans 219–228 (DKKDKIRTGS). Positions 229–239 (DETLVSKESSA) are enriched in polar residues.

This sequence belongs to the PINX1 family.

The protein localises to the nucleus. It localises to the nucleolus. In terms of biological role, involved in rRNA-processing at A0, A1 and A2 sites and negatively regulates telomerase. The polypeptide is Protein PXR1 (PXR1) (Candida albicans (strain SC5314 / ATCC MYA-2876) (Yeast)).